Reading from the N-terminus, the 203-residue chain is 2-phospho-L-lactate guanylyltransferase (203 aa).

This sequence belongs to the CofC family. Homodimer.

It catalyses the reaction (2S)-2-phospholactate + GTP + H(+) = (2S)-lactyl-2-diphospho-5'-guanosine + diphosphate. Its pathway is cofactor biosynthesis; coenzyme F420 biosynthesis. Guanylyltransferase that catalyzes the activation of (2S)-2-phospholactate (2-PL) as (2S)-lactyl-2-diphospho-5'-guanosine, via the condensation of 2-PL with GTP. It is involved in the biosynthesis of coenzyme F420, a hydride carrier cofactor. This Halomicrobium mukohataei (strain ATCC 700874 / DSM 12286 / JCM 9738 / NCIMB 13541) (Haloarcula mukohataei) protein is 2-phospho-L-lactate guanylyltransferase.